Consider the following 129-residue polypeptide: Small ribosomal subunit protein uS11 (129 aa).

It belongs to the universal ribosomal protein uS11 family. Part of the 30S ribosomal subunit. Interacts with proteins S7 and S18. Binds to IF-3.

Functionally, located on the platform of the 30S subunit, it bridges several disparate RNA helices of the 16S rRNA. Forms part of the Shine-Dalgarno cleft in the 70S ribosome. In Halalkalibacterium halodurans (strain ATCC BAA-125 / DSM 18197 / FERM 7344 / JCM 9153 / C-125) (Bacillus halodurans), this protein is Small ribosomal subunit protein uS11.